Here is a 339-residue protein sequence, read N- to C-terminus: MTQVQTAAVQPDAIPVAAPAPQRWRVADVVALFELPFNDLMFRAQQVHREHFDANAVQLSTLLSIKTGGCEEDCGYCSQSSHHDTGLKAEKLMDVDAVLDAARAAKANGASRFCMGAAWRNPKERHMPALTEMVRGVKELGLETCMTLGMLEDEQAQELANAGLDYYNHNLDTSPEFYGQVISTRTYQDRLDTLDRVRDAGINVCCGGIIGMGESRRERAGLISQLANLNPYPESVPINNLVAIEGTPLEGTAPLDPFEFVRTIAVARITMPKAVVRLSAGREQLDDAMQAMCFLAGANSMFYGDQLLTTSNPQTQRDRALFERLGIRASDADAMQANA.

Positions 55-282 (NAVQLSTLLS…KAVVRLSAGR (228 aa)) constitute a Radical SAM core domain. [4Fe-4S] cluster is bound by residues Cys70, Cys74, and Cys77. [2Fe-2S] cluster contacts are provided by Cys114, Cys145, Cys205, and Arg277.

This sequence belongs to the radical SAM superfamily. Biotin synthase family. Homodimer. It depends on [4Fe-4S] cluster as a cofactor. [2Fe-2S] cluster is required as a cofactor.

The catalysed reaction is (4R,5S)-dethiobiotin + (sulfur carrier)-SH + 2 reduced [2Fe-2S]-[ferredoxin] + 2 S-adenosyl-L-methionine = (sulfur carrier)-H + biotin + 2 5'-deoxyadenosine + 2 L-methionine + 2 oxidized [2Fe-2S]-[ferredoxin]. It participates in cofactor biosynthesis; biotin biosynthesis; biotin from 7,8-diaminononanoate: step 2/2. Functionally, catalyzes the conversion of dethiobiotin (DTB) to biotin by the insertion of a sulfur atom into dethiobiotin via a radical-based mechanism. The polypeptide is Biotin synthase (Burkholderia ambifaria (strain MC40-6)).